The sequence spans 399 residues: Enoyl-[acyl-carrier-protein] reductase [NADH] (399 aa).

NAD(+) is bound by residues 48–53 (GASTGY), 74–75 (FE), 111–112 (DA), and 139–140 (LA). Position 225 (Y225) interacts with substrate. The Proton donor role is filled by Y235. NAD(+) contacts are provided by residues K244 and 274–276 (VVT).

Belongs to the TER reductase family. As to quaternary structure, monomer.

The catalysed reaction is a 2,3-saturated acyl-[ACP] + NAD(+) = a (2E)-enoyl-[ACP] + NADH + H(+). The protein operates within lipid metabolism; fatty acid biosynthesis. Functionally, involved in the final reduction of the elongation cycle of fatty acid synthesis (FAS II). Catalyzes the reduction of a carbon-carbon double bond in an enoyl moiety that is covalently linked to an acyl carrier protein (ACP). The protein is Enoyl-[acyl-carrier-protein] reductase [NADH] of Yersinia pestis bv. Antiqua (strain Antiqua).